Consider the following 158-residue polypeptide: Copper transporter 2 (158 aa).

Positions 1–20 (MDHDHMHDMPPPSPSSSSMS) are disordered. 2 helical membrane-spanning segments follow: residues 53-73 (GMYA…EWLA) and 104-124 (YLVM…AIAG).

Belongs to the copper transporter (Ctr) (TC 1.A.56) family. SLC31A subfamily. As to expression, highly expressed in leaves and at lower levels in roots, stems and flowers.

Its subcellular location is the membrane. Involved in the transport of copper. This chain is Copper transporter 2 (COPT2), found in Arabidopsis thaliana (Mouse-ear cress).